Here is a 338-residue protein sequence, read N- to C-terminus: GTPase Obg (338 aa).

In terms of domain architecture, Obg spans Met1–Leu159. One can recognise an OBG-type G domain in the interval Ala160–Trp331. GTP contacts are provided by residues Gly166 to Ser173, Phe191 to Lys195, Asp213 to Gly216, Asn283 to Asp286, and Ser312 to Ala314. The Mg(2+) site is built by Ser173 and Thr193.

Belongs to the TRAFAC class OBG-HflX-like GTPase superfamily. OBG GTPase family. As to quaternary structure, monomer. Mg(2+) is required as a cofactor.

Its subcellular location is the cytoplasm. Its function is as follows. An essential GTPase which binds GTP, GDP and possibly (p)ppGpp with moderate affinity, with high nucleotide exchange rates and a fairly low GTP hydrolysis rate. Plays a role in control of the cell cycle, stress response, ribosome biogenesis and in those bacteria that undergo differentiation, in morphogenesis control. The chain is GTPase Obg from Geobacter sulfurreducens (strain ATCC 51573 / DSM 12127 / PCA).